Here is a 363-residue protein sequence, read N- to C-terminus: Histidinol-phosphate aminotransferase (363 aa).

Lys226 carries the post-translational modification N6-(pyridoxal phosphate)lysine.

The protein belongs to the class-II pyridoxal-phosphate-dependent aminotransferase family. Histidinol-phosphate aminotransferase subfamily. Homodimer. Pyridoxal 5'-phosphate is required as a cofactor.

The enzyme catalyses L-histidinol phosphate + 2-oxoglutarate = 3-(imidazol-4-yl)-2-oxopropyl phosphate + L-glutamate. It participates in amino-acid biosynthesis; L-histidine biosynthesis; L-histidine from 5-phospho-alpha-D-ribose 1-diphosphate: step 7/9. This chain is Histidinol-phosphate aminotransferase, found in Campylobacter lari (strain RM2100 / D67 / ATCC BAA-1060).